Here is a 518-residue protein sequence, read N- to C-terminus: DNA-(apurinic or apyrimidinic site) endonuclease 2 (518 aa).

Positions 8 and 48 each coordinate Mg(2+). Residue Tyr-156 is part of the active site. The Mg(2+) site is built by Asp-197, Asn-199, Asp-303, and His-304. Asp-197 functions as the Proton donor/acceptor in the catalytic mechanism. Catalysis depends on His-304, which acts as the Proton acceptor. Residues 355–405 (STLQHNNQTRVQTCQNKAQVRSTRPQPSQVGSSRGQKNLKSYFQPSPSCPQ) show a composition bias toward polar residues. The interval 355–407 (STLQHNNQTRVQTCQNKAQVRSTRPQPSQVGSSRGQKNLKSYFQPSPSCPQAS) is disordered. Lys-371 is covalently cross-linked (Glycyl lysine isopeptide (Lys-Gly) (interchain with G-Cter in ubiquitin)). Residues 390–397 (QKNLKSYF) are required for the interaction and colocalization with PCNA in nuclear foci in presence of oxidative-induced DNA damaging agents. Residues Cys-469, His-472, Cys-495, and Cys-509 each contribute to the Zn(2+) site. The GRF-type zinc-finger motif lies at 469 to 518 (CGGHREPCVMRTVKKPGPNLGRRFYMCARPRGPPTDPSSRCNFFLWSRPS).

Belongs to the DNA repair enzymes AP/ExoA family. Interacts with PCNA; this interaction is triggered by reactive oxygen species and increased by misincorporation of uracil in nuclear DNA. Requires Mg(2+) as cofactor. Mn(2+) serves as cofactor. In terms of processing, ubiquitinated by the CUL9-RBX1 complex. Ubiquitinated by MKRN3 at Lys-371 leading to proteasomal degradation. Highly expressed in brain and kidney. Weakly expressed in the fetal brain.

The protein localises to the nucleus. The protein resides in the cytoplasm. It is found in the mitochondrion. It catalyses the reaction Exonucleolytic cleavage in the 3'- to 5'-direction to yield nucleoside 5'-phosphates.. Its activity is regulated as follows. 3'-5' exonuclease activity is activated by sodium and manganese. 3'-5' exonuclease and 3'-phosphodiesterase activities are stimulated in presence of PCNA. Functions as a weak apurinic/apyrimidinic (AP) endodeoxyribonuclease in the DNA base excision repair (BER) pathway of DNA lesions induced by oxidative and alkylating agents. Initiates repair of AP sites in DNA by catalyzing hydrolytic incision of the phosphodiester backbone immediately adjacent to the damage, generating a single-strand break with 5'-deoxyribose phosphate and 3'-hydroxyl ends. Also displays double-stranded DNA 3'-5' exonuclease, 3'-phosphodiesterase activities. Shows robust 3'-5' exonuclease activity on 3'-recessed heteroduplex DNA and is able to remove mismatched nucleotides preferentially. Also exhibits 3'-5' exonuclease activity on a single nucleotide gap containing heteroduplex DNA and on blunt-ended substrates. Shows fairly strong 3'-phosphodiesterase activity involved in the removal of 3'-damaged termini formed in DNA by oxidative agents. In the nucleus functions in the PCNA-dependent BER pathway. Plays a role in reversing blocked 3' DNA ends, problematic lesions that preclude DNA synthesis. Required for somatic hypermutation (SHM) and DNA cleavage step of class switch recombination (CSR) of immunoglobulin genes. Required for proper cell cycle progression during proliferation of peripheral lymphocytes. This is DNA-(apurinic or apyrimidinic site) endonuclease 2 (APEX2) from Homo sapiens (Human).